Here is a 532-residue protein sequence, read N- to C-terminus: CTP synthase (532 aa).

The segment at 1–267 (MTKFIFVTGG…DDIVLKILGL (267 aa)) is amidoligase domain. Ser13 provides a ligand contact to CTP. A UTP-binding site is contributed by Ser13. 14–19 (SLGKGI) provides a ligand contact to ATP. Tyr54 contributes to the L-glutamine binding site. Position 71 (Asp71) interacts with ATP. The Mg(2+) site is built by Asp71 and Glu141. Residues 148 to 150 (DIE), 188 to 193 (KTKPTQ), and Lys224 contribute to the CTP site. UTP is bound by residues 188–193 (KTKPTQ) and Lys224. The 241-residue stretch at 292–532 (EIAIVGKYVE…EFVKATLANR (241 aa)) folds into the Glutamine amidotransferase type-1 domain. An L-glutamine-binding site is contributed by Gly354. Catalysis depends on Cys381, which acts as the Nucleophile; for glutamine hydrolysis. L-glutamine is bound by residues 382–385 (LGMQ), Glu405, and Arg462. Residues His507 and Glu509 contribute to the active site.

The protein belongs to the CTP synthase family. In terms of assembly, homotetramer.

It carries out the reaction UTP + L-glutamine + ATP + H2O = CTP + L-glutamate + ADP + phosphate + 2 H(+). The catalysed reaction is L-glutamine + H2O = L-glutamate + NH4(+). It catalyses the reaction UTP + NH4(+) + ATP = CTP + ADP + phosphate + 2 H(+). It functions in the pathway pyrimidine metabolism; CTP biosynthesis via de novo pathway; CTP from UDP: step 2/2. Allosterically activated by GTP, when glutamine is the substrate; GTP has no effect on the reaction when ammonia is the substrate. The allosteric effector GTP functions by stabilizing the protein conformation that binds the tetrahedral intermediate(s) formed during glutamine hydrolysis. Inhibited by the product CTP, via allosteric rather than competitive inhibition. In terms of biological role, catalyzes the ATP-dependent amination of UTP to CTP with either L-glutamine or ammonia as the source of nitrogen. Regulates intracellular CTP levels through interactions with the four ribonucleotide triphosphates. In Desulfitobacterium hafniense (strain Y51), this protein is CTP synthase.